A 63-amino-acid polypeptide reads, in one-letter code: UPF0370 protein PC1_1167 (63 aa).

A helical membrane pass occupies residues 3–23; the sequence is WLADYWWIILIILIGMLINGI. A disordered region spans residues 37 to 63; the sequence is NKPKLPPHRDNNDKWDDEDDDWPKKKP.

This sequence belongs to the UPF0370 family.

The protein resides in the cell membrane. In Pectobacterium carotovorum subsp. carotovorum (strain PC1), this protein is UPF0370 protein PC1_1167.